The chain runs to 102 residues: Small ribosomal subunit protein uS10 (102 aa).

Residues 34–59 (QMSGPIPLPTKRLLVPTRKSPDGEGK) are disordered.

This sequence belongs to the universal ribosomal protein uS10 family. Part of the 30S ribosomal subunit.

Functionally, involved in the binding of tRNA to the ribosomes. The chain is Small ribosomal subunit protein uS10 from Methanopyrus kandleri (strain AV19 / DSM 6324 / JCM 9639 / NBRC 100938).